The primary structure comprises 303 residues: Probable porphobilinogen deaminase (303 aa).

The residue at position 233 (Cys233) is an S-(dipyrrolylmethanemethyl)cysteine.

The protein belongs to the HMBS family. Dipyrromethane serves as cofactor.

It catalyses the reaction 4 porphobilinogen + H2O = hydroxymethylbilane + 4 NH4(+). Its pathway is porphyrin-containing compound metabolism; protoporphyrin-IX biosynthesis; coproporphyrinogen-III from 5-aminolevulinate: step 2/4. Tetrapolymerization of the monopyrrole PBG into the hydroxymethylbilane pre-uroporphyrinogen in several discrete steps. In Methanocella arvoryzae (strain DSM 22066 / NBRC 105507 / MRE50), this protein is Probable porphobilinogen deaminase.